Consider the following 304-residue polypeptide: Protease HtpX homolog (304 aa).

2 consecutive transmembrane segments (helical) span residues 14–34 (VFIVIGFFIFVLMVGAAIGII) and 39–59 (YLNGLILAAVIGAFYILIMVM). H144 lines the Zn(2+) pocket. The active site involves E145. Position 148 (H148) interacts with Zn(2+). 2 consecutive transmembrane segments (helical) span residues 161 to 181 (IALVAVIAILSDLAMRMIFWG) and 202 to 222 (LIIYIVALVFVVLAPIIATAI). E231 lines the Zn(2+) pocket. A disordered region spans residues 276-295 (SPLKSKKDKPGIFDSHPPIS).

The protein belongs to the peptidase M48B family. Zn(2+) is required as a cofactor.

It is found in the cell membrane. The protein is Protease HtpX homolog of Listeria welshimeri serovar 6b (strain ATCC 35897 / DSM 20650 / CCUG 15529 / CIP 8149 / NCTC 11857 / SLCC 5334 / V8).